We begin with the raw amino-acid sequence, 691 residues long: Probable E3 ubiquitin-protein ligase RHG1A (691 aa).

Disordered stretches follow at residues 71–91 (SLGE…NEQR), 151–235 (GPGT…PRGM), 316–336 (SFVV…GSRT), 349–373 (VGGT…SRSI), and 395–501 (QSSR…MHNR). The segment covering 80 to 91 (TKDEASSHNEQR) has biased composition (basic and acidic residues). Composition is skewed to polar residues over residues 204-213 (GESSSWTPGS) and 317-328 (FVVSRNPNSTPV). Residues 361-370 (RNLHLDETRS) are compositionally biased toward basic and acidic residues. Over residues 395 to 406 (QSSRNVTNGNLN) the composition is skewed to polar residues. Low complexity predominate over residues 407-419 (SASSVSRTGSTTS). Residues 429 to 440 (NLAWTSYQNSPH) show a composition bias toward polar residues. The span at 454 to 465 (RSLLSSLAADAT) shows a compositional bias: low complexity. The RING-type; atypical zinc-finger motif lies at 637-678 (CCVCQEEYTEGEDMGTLECGHEFHSQCIKEWLKQKNLCPICK).

As to expression, expressed in stems, flowers, green siliques, cauline leaves, seeds and roots.

It carries out the reaction S-ubiquitinyl-[E2 ubiquitin-conjugating enzyme]-L-cysteine + [acceptor protein]-L-lysine = [E2 ubiquitin-conjugating enzyme]-L-cysteine + N(6)-ubiquitinyl-[acceptor protein]-L-lysine.. It functions in the pathway protein modification; protein ubiquitination. Functionally, probable E3 ubiquitin-protein ligase that may possess E3 ubiquitin ligase activity in vitro. The chain is Probable E3 ubiquitin-protein ligase RHG1A from Arabidopsis thaliana (Mouse-ear cress).